The primary structure comprises 423 residues: MSVTSEVQGLRALNEVDPEIAELIRLEERREADTLRLIASENYVSRAVLEATGSVLTNKYSEGYPHKRYYEGQQQVDVVEELARTRVAKLFGADHVNVQPYSGSPANLAVYLAFAQANDTIMGLGLPAGGHLTHGWSVSITGKYFKSVPYGVRESDHRIDLDQVRDLARAHRPKLIWCGTTAYPRTLDFAAFRAIADEVGAILAADIAHIAGLVAAGVHPSPVGIADVVTSTTHKTFRGPRGAMILCKKEHAGAIDKAVFPGLQGGPHNHTTAAIAVAAKEASEEGFRAYARQIVVNAQALGRALESRGFRLITGGTDNHLLLIDMTPKGIAGKPYAQALDRAGIVANYNSIPFDPRKPFDPSGLRIGTPAVTSRGMGVAEMERLAAWMDEVAQNVNDEARIARIAAEVAELCRGFPAPGIRL.

(6S)-5,6,7,8-tetrahydrofolate contacts are provided by residues leucine 126 and 130–132 (GHL). An N6-(pyridoxal phosphate)lysine modification is found at lysine 235.

It belongs to the SHMT family. Homodimer. It depends on pyridoxal 5'-phosphate as a cofactor.

It is found in the cytoplasm. It carries out the reaction (6R)-5,10-methylene-5,6,7,8-tetrahydrofolate + glycine + H2O = (6S)-5,6,7,8-tetrahydrofolate + L-serine. It participates in one-carbon metabolism; tetrahydrofolate interconversion. It functions in the pathway amino-acid biosynthesis; glycine biosynthesis; glycine from L-serine: step 1/1. Functionally, catalyzes the reversible interconversion of serine and glycine with tetrahydrofolate (THF) serving as the one-carbon carrier. This reaction serves as the major source of one-carbon groups required for the biosynthesis of purines, thymidylate, methionine, and other important biomolecules. Also exhibits THF-independent aldolase activity toward beta-hydroxyamino acids, producing glycine and aldehydes, via a retro-aldol mechanism. In Sorangium cellulosum (strain So ce56) (Polyangium cellulosum (strain So ce56)), this protein is Serine hydroxymethyltransferase.